The following is a 499-amino-acid chain: Neuropeptide CCHamide-1 receptor (499 aa).

At 1–85 (MIANLVSMET…GRRPETYIVP (85 aa)) the chain is on the extracellular side. N-linked (GlcNAc...) asparagine glycosylation is found at Asn33 and Asn61. A helical transmembrane segment spans residues 86-106 (ILFALIFVVGVLGNGTLIVVF). Over 107 to 117 (LSVRQMRNVPN) the chain is Cytoplasmic. A helical transmembrane segment spans residues 118–138 (TYILSLALADLLVIITTVPLA). The Extracellular portion of the chain corresponds to 139–162 (STVYTVEYWPYGSFLCSLSEFMKD). A disulfide bridge links Cys154 with Cys240. A helical membrane pass occupies residues 163-183 (VSIGVSVFTLTALSGDRYFAI). The Cytoplasmic segment spans residues 184–203 (VDPLRKFHAHGGGRRATRMT). Residues 204–224 (LATAVSIWLLAILCGLPALIG) traverse the membrane as a helical segment. The Extracellular portion of the chain corresponds to 225 to 259 (SNLKHLGINEKSIVICYPYPEEWGINYAKSMVLLH). A helical transmembrane segment spans residues 260–280 (FLVYYAIPLVVIAVFYVLIAL). Residues 281–309 (HLMYSASVPGEIQGAVRQVRARRKVAVTV) are Cytoplasmic-facing. A helical membrane pass occupies residues 310–330 (LAFVVIFGICFLPYHVFFLWF). The Extracellular portion of the chain corresponds to 331-348 (YFWPTAQDDYNAFWHVLR). Residues 349-369 (IVAYCMSFANSCANPVALYFV) form a helical membrane-spanning segment. Topologically, residues 370 to 499 (SGAFRKHFNR…PAKFQESLLN (130 aa)) are cytoplasmic.

This sequence belongs to the G-protein coupled receptor 1 family. As to expression, low levels in larval brain and gut with higher levels in adult brain and gut. In the brain expression is widely distributed, including strong expression in the mushroom bodies. Expressed weakly in s-LNv (small ventral lateral neurons) and strongly in l-LNv (large ventral lateral neurons), but not in other clock neurons.

It is found in the cell membrane. In terms of biological role, receptor for the neuropeptide CCHamide-1. Plays a role in the modulation of starvation-induced olfactory behavior where starved flies show increased responsiveness to food odorants, repellants and pheromones. Contributes to regulation of sleep latency (the time required to fall asleep), amount of sleep and depth of sleep (arousability). Involved in modulation of PDP1 and PDF levels in s-LNv (small ventral lateral neurons) clock neurons in response to CCHa1 released by DN1a (anterior dorsal neurons 1) clock neurons, to regulate morning activity. In a subset of dopaminergic cells in the protocerebral anterior medial (PAM) cluster involved in suppressing arousability in response to CCHa1 secreted by gut enteroendocrine cells. The chain is Neuropeptide CCHamide-1 receptor from Drosophila melanogaster (Fruit fly).